We begin with the raw amino-acid sequence, 63 residues long: Large ribosomal subunit protein bL28 (63 aa).

The interval 1–21 (MSRRDDLTGKGPMFGNNRSHA) is disordered.

This sequence belongs to the bacterial ribosomal protein bL28 family.

The polypeptide is Large ribosomal subunit protein bL28 (Mycoplasmopsis pulmonis (strain UAB CTIP) (Mycoplasma pulmonis)).